The sequence spans 264 residues: 3-methyl-2-oxobutanoate hydroxymethyltransferase (264 aa).

Mg(2+)-binding residues include D41 and D80. 3-methyl-2-oxobutanoate contacts are provided by residues 41–42 (DS), D80, and K109. Residue E111 participates in Mg(2+) binding. The Proton acceptor role is filled by E178.

This sequence belongs to the PanB family. In terms of assembly, homodecamer; pentamer of dimers. Requires Mg(2+) as cofactor.

The protein localises to the cytoplasm. It carries out the reaction 3-methyl-2-oxobutanoate + (6R)-5,10-methylene-5,6,7,8-tetrahydrofolate + H2O = 2-dehydropantoate + (6S)-5,6,7,8-tetrahydrofolate. The protein operates within cofactor biosynthesis; (R)-pantothenate biosynthesis; (R)-pantoate from 3-methyl-2-oxobutanoate: step 1/2. Its function is as follows. Catalyzes the reversible reaction in which hydroxymethyl group from 5,10-methylenetetrahydrofolate is transferred onto alpha-ketoisovalerate to form ketopantoate. The chain is 3-methyl-2-oxobutanoate hydroxymethyltransferase from Thermosipho melanesiensis (strain DSM 12029 / CIP 104789 / BI429).